Consider the following 544-residue polypeptide: Secreted aspartic protease 9 (544 aa).

The first 17 residues, 1 to 17 (MRLNSVALLSLVATALA), serve as a signal peptide directing secretion. Positions 31 to 50 (GESKDDLSPEDDSNPRFVKR) are disordered. A Peptidase A1 domain is found at 65-479 (YMATLKIGSN…DLDDYEVSLA (415 aa)). 83 to 85 (DTG) contributes to the pepstatin A binding site. Cysteine 98 and cysteine 195 form a disulfide bridge. Residue threonine 167 is part of the active site. N-linked (GlcNAc...) asparagine glycans are attached at residues asparagine 212, asparagine 240, and asparagine 252. The active site involves aspartate 371. Position 371–375 (371–375 (DTGST)) interacts with pepstatin A. Cysteine 406 and cysteine 441 are joined by a disulfide. Residues asparagine 422 and asparagine 499 are each glycosylated (N-linked (GlcNAc...) asparagine). The interval 500–520 (SSGSGTTSSSGTSTSTSTRHS) is disordered.

Belongs to the peptidase A1 family. Monomer. Post-translationally, the GPI-anchor is attached to the protein in the endoplasmic reticulum and serves to target the protein to the cell surface. There, the glucosamine-inositol phospholipid moiety is cleaved off and the GPI-modified mannoprotein is covalently attached via its lipidless GPI glycan remnant to the 1,6-beta-glucan of the outer cell wall layer.

Its subcellular location is the cell membrane. It localises to the secreted. It is found in the cell wall. It carries out the reaction Preferential cleavage at the carboxyl of hydrophobic amino acids, but fails to cleave 15-Leu-|-Tyr-16, 16-Tyr-|-Leu-17 and 24-Phe-|-Phe-25 of insulin B chain. Activates trypsinogen, and degrades keratin.. In terms of biological role, secreted aspartic peptidases (SAPs) are a group of ten acidic hydrolases considered as key virulence factors. These enzymes supply the fungus with nutrient amino acids as well as are able to degrade the selected host's proteins involved in the immune defense. Moreover, acts toward human hemoglobin though limited proteolysis to generate a variety of antimicrobial hemocidins, enabling to compete with the other microorganisms of the same physiological niche using the microbicidal peptides generated from the host protein. Functionally, plays a key role in defense against host by cleaving histatin-5 (Hst 5), a peptide from human saliva that carries out fungicidal activity. The cleavage rate decreases in an order of SAP2 &gt; SAP9 &gt; SAP3 &gt; SAP7 &gt; SAP4 &gt; SAP1 &gt; SAP8. The first cleavage occurs between residues 'Lys-17' and 'His-18' of Hst 5, giving DSHAKRHHGYKRKFHEK and HHSHRGY peptides. Simultaneously, the DSHAKRHHGYKRK peptide is also formed. Further fragmentation by SAP9 results in FHEK product. This is Secreted aspartic protease 9 from Candida albicans (Yeast).